Consider the following 188-residue polypeptide: Molybdopterin synthase catalytic subunit (188 aa).

The segment covering 1–14 (MATQPPQDQTSTTP) has biased composition (low complexity). Residues 1-23 (MATQPPQDQTSTTPSLPPHLDPT) form a disordered region. Substrate-binding positions include 134–135 (HR), Lys-150, and 157–159 (KRE).

The protein belongs to the MoaE family. MOCS2B subfamily. In terms of assembly, heterotetramer; composed of 2 small (MOCS2A) and 2 large (MOCS2B) subunits.

It localises to the cytoplasm. The enzyme catalyses 2 [molybdopterin-synthase sulfur-carrier protein]-C-terminal-Gly-aminoethanethioate + cyclic pyranopterin phosphate + H2O = molybdopterin + 2 [molybdopterin-synthase sulfur-carrier protein]-C-terminal Gly-Gly + 2 H(+). It functions in the pathway cofactor biosynthesis; molybdopterin biosynthesis. In terms of biological role, catalytic subunit of the molybdopterin synthase complex, a complex that catalyzes the conversion of precursor Z into molybdopterin. Acts by mediating the incorporation of 2 sulfur atoms from thiocarboxylated MOCS2A into precursor Z to generate a dithiolene group. The protein is Molybdopterin synthase catalytic subunit of Aspergillus fumigatus (strain ATCC MYA-4609 / CBS 101355 / FGSC A1100 / Af293) (Neosartorya fumigata).